Consider the following 185-residue polypeptide: uncharacterized protein (185 aa).

Position 1 is an N-acetylmethionine (Met1). Basic and acidic residues-rich tracts occupy residues 1–18, 26–47, and 59–71; these read MDAF…QDKQ, TPSD…TTEE, and SNED…PVLE. Disordered stretches follow at residues 1–71 and 155–185; these read MDAF…PVLE and DHDR…DGLL. The span at 170-185 shows a compositional bias: acidic residues; sequence LPEELETDQDFLDGLL.

This is an uncharacterized protein from Saccharomyces cerevisiae (strain ATCC 204508 / S288c) (Baker's yeast).